The sequence spans 560 residues: (E)-beta-farnesene synthase (560 aa).

Residues Asp312, Asp316, Asp457, and Glu465 each contribute to the Mg(2+) site. The DDXXD motif motif lies at 312-316; it reads DDTFD.

It belongs to the terpene synthase family. Requires Mg(2+) as cofactor. Co(2+) is required as a cofactor. The cofactor is Mn(2+).

The protein resides in the cytoplasm. The catalysed reaction is (2E,6E)-farnesyl diphosphate = (E)-beta-farnesene + diphosphate. It functions in the pathway secondary metabolite biosynthesis; terpenoid biosynthesis. Its function is as follows. Sesquiterpene cyclase catalyzing the production of beta-farnesene from farnesyl diphosphate. The protein is (E)-beta-farnesene synthase of Citrus junos (Yuzu).